The sequence spans 291 residues: ATP phosphoribosyltransferase (291 aa).

The protein belongs to the ATP phosphoribosyltransferase family. Long subfamily. It depends on Mg(2+) as a cofactor.

The protein localises to the cytoplasm. It catalyses the reaction 1-(5-phospho-beta-D-ribosyl)-ATP + diphosphate = 5-phospho-alpha-D-ribose 1-diphosphate + ATP. It participates in amino-acid biosynthesis; L-histidine biosynthesis; L-histidine from 5-phospho-alpha-D-ribose 1-diphosphate: step 1/9. Feedback inhibited by histidine. Functionally, catalyzes the condensation of ATP and 5-phosphoribose 1-diphosphate to form N'-(5'-phosphoribosyl)-ATP (PR-ATP). Has a crucial role in the pathway because the rate of histidine biosynthesis seems to be controlled primarily by regulation of HisG enzymatic activity. The chain is ATP phosphoribosyltransferase from Trichlorobacter lovleyi (strain ATCC BAA-1151 / DSM 17278 / SZ) (Geobacter lovleyi).